Reading from the N-terminus, the 425-residue chain is Serine--tRNA ligase (425 aa).

Residue 230–232 participates in L-serine binding; the sequence is TAE. 261-263 serves as a coordination point for ATP; that stretch reads RSE. Glu284 contacts L-serine. Position 348-351 (348-351) interacts with ATP; sequence EISS. Ser384 serves as a coordination point for L-serine.

It belongs to the class-II aminoacyl-tRNA synthetase family. Type-1 seryl-tRNA synthetase subfamily. Homodimer. The tRNA molecule binds across the dimer.

The protein resides in the cytoplasm. The catalysed reaction is tRNA(Ser) + L-serine + ATP = L-seryl-tRNA(Ser) + AMP + diphosphate + H(+). It catalyses the reaction tRNA(Sec) + L-serine + ATP = L-seryl-tRNA(Sec) + AMP + diphosphate + H(+). The protein operates within aminoacyl-tRNA biosynthesis; selenocysteinyl-tRNA(Sec) biosynthesis; L-seryl-tRNA(Sec) from L-serine and tRNA(Sec): step 1/1. In terms of biological role, catalyzes the attachment of serine to tRNA(Ser). Is also able to aminoacylate tRNA(Sec) with serine, to form the misacylated tRNA L-seryl-tRNA(Sec), which will be further converted into selenocysteinyl-tRNA(Sec). The sequence is that of Serine--tRNA ligase from Streptococcus pyogenes serotype M49 (strain NZ131).